The primary structure comprises 273 residues: Citrate lyase subunit beta-like protein (273 aa).

Substrate is bound by residues R64 and E112. Residues E112 and D138 each contribute to the Mg(2+) site.

The protein belongs to the HpcH/HpaI aldolase family. Citrate lyase beta subunit-like subfamily. In terms of assembly, homotrimer. The cofactor is Mg(2+).

Functionally, may play a role in fatty acid biosynthesis. This chain is Citrate lyase subunit beta-like protein (citE), found in Mycobacterium tuberculosis (strain CDC 1551 / Oshkosh).